Consider the following 798-residue polypeptide: Protocadherin beta-14 (798 aa).

The signal sequence occupies residues 1–26 (MEIRGALDLRKRQVLIFLVLLGLSRA). The Extracellular portion of the chain corresponds to 27–686 (GTESAHYSVA…APAQAQADSL (660 aa)). Cadherin domains lie at 35–133 (VAEE…SPTF), 138–242 (ILIK…APEF), 247–347 (YEVQ…PPEV), 352–451 (ITKR…APAF), and 456–561 (YTLF…SPFV). Cys-96 and Cys-102 are joined by a disulfide. Residue Asn-169 is glycosylated (N-linked (GlcNAc...) asparagine). N-linked (GlcNAc...) asparagine glycans are attached at residues Asn-359, Asn-418, and Asn-436. A glycan (N-linked (GlcNAc...) asparagine) is linked at Asn-567. In terms of domain architecture, Cadherin 6 spans 568-671 (GSAPCTELVP…LVDGFSQPYL (104 aa)). The helical transmembrane segment at 687-711 (TVYLVVALASVSSLFLFSVLLFVAV) threads the bilayer. Topologically, residues 712–798 (RLCRRSRAAS…FRNSFGLNIQ (87 aa)) are cytoplasmic.

The protein localises to the cell membrane. In terms of biological role, potential calcium-dependent cell-adhesion protein. May be involved in the establishment and maintenance of specific neuronal connections in the brain. The protein is Protocadherin beta-14 (PCDHB14) of Pan troglodytes (Chimpanzee).